The primary structure comprises 339 residues: Phenylalanine--tRNA ligase alpha subunit (339 aa).

Glutamate 254 lines the Mg(2+) pocket.

The protein belongs to the class-II aminoacyl-tRNA synthetase family. Phe-tRNA synthetase alpha subunit type 1 subfamily. Tetramer of two alpha and two beta subunits. Mg(2+) serves as cofactor.

It is found in the cytoplasm. It catalyses the reaction tRNA(Phe) + L-phenylalanine + ATP = L-phenylalanyl-tRNA(Phe) + AMP + diphosphate + H(+). This is Phenylalanine--tRNA ligase alpha subunit (pheS) from Chlamydia pneumoniae (Chlamydophila pneumoniae).